The primary structure comprises 215 residues: UPF0056 membrane protein BU267 (215 aa).

6 helical membrane-spanning segments follow: residues 14–34 (FFIGLCALVNPIGMIPIFTTM), 56–76 (LILLISLFFGSNILNIFGISI), 81–101 (IAGGILIISIAFSMISGQFIK), 120–140 (VVPLAMPLIAGPGAISSTIVW), 150–170 (LFLCSLVIFLFSFVCWLCFEA), and 189–209 (IMGLLLMSLGIEFISTGIGAI).

This sequence belongs to the UPF0056 (MarC) family.

It localises to the cell membrane. The sequence is that of UPF0056 membrane protein BU267 from Buchnera aphidicola subsp. Acyrthosiphon pisum (strain APS) (Acyrthosiphon pisum symbiotic bacterium).